We begin with the raw amino-acid sequence, 315 residues long: Probable NAD(P)H-dependent D-xylose reductase xyl1 (315 aa).

Tyrosine 50 (proton donor) is an active-site residue. Residue histidine 112 coordinates substrate. NAD(+) is bound by residues 166-167 (SN), 215-224 (SSFGPLSFVE), and 271-281 (KSNDPTRLAQN).

It belongs to the aldo/keto reductase family.

The catalysed reaction is xylitol + NAD(+) = D-xylose + NADH + H(+). It carries out the reaction xylitol + NADP(+) = D-xylose + NADPH + H(+). Its pathway is carbohydrate metabolism; D-xylose degradation. In terms of biological role, catalyzes the initial reaction in the xylose utilization pathway by reducing D-xylose into xylitol. Xylose is a major component of hemicelluloses such as xylan. Most fungi utilize D-xylose via three enzymatic reactions, xylose reductase (XR), xylitol dehydrogenase (XDH), and xylulokinase, to form xylulose 5-phosphate, which enters pentose phosphate pathway. The chain is Probable NAD(P)H-dependent D-xylose reductase xyl1 (xyl1) from Aspergillus fumigatus (strain ATCC MYA-4609 / CBS 101355 / FGSC A1100 / Af293) (Neosartorya fumigata).